The following is a 545-amino-acid chain: Sensory neuron membrane protein 1 (545 aa).

Residues 1-10 (MELKERNFKK) are Cytoplasmic-facing. A helical transmembrane segment spans residues 11–31 (IGLICVAVLLCGMVFSYGIFP). Residues 32–464 (SILRFMIKQN…LFLGLKFNAT (433 aa)) are Extracellular-facing. 3 N-linked (GlcNAc...) asparagine glycosylation sites follow: Asn69, Asn214, and Asn227. Cystine bridges form between Cys266–Cys331, Cys295–Cys351, and Cys333–Cys340. N-linked (GlcNAc...) asparagine glycans are attached at residues Asn444 and Asn462. The chain crosses the membrane as a helical span at residues 465–485 (VKWLTIIIGTVGAVGSAYMYF). Residues 486-545 (RKETKTTDVAPVDVSTPDTNPSSAKDGVVNVSLGRNLPPVIDGLDKPPKLRATELQQERY) lie on the Cytoplasmic side of the membrane.

The protein belongs to the CD36 family. In terms of tissue distribution, selectively expressed in antenna.

The protein resides in the cell membrane. Its function is as follows. Plays an olfactory role that is not restricted to pheromone sensitivity. This chain is Sensory neuron membrane protein 1 (snmp1), found in Anopheles gambiae (African malaria mosquito).